A 381-amino-acid chain; its full sequence is Spermidine/putrescine import ATP-binding protein PotA (381 aa).

Positions 22–252 (VELRNVFKFF…PKTSFVADFI (231 aa)) constitute an ABC transporter domain. 54–61 (GPSGCGKT) lines the ATP pocket.

Belongs to the ABC transporter superfamily. Spermidine/putrescine importer (TC 3.A.1.11.1) family. The complex is composed of two ATP-binding proteins (PotA), two transmembrane proteins (PotB and PotC) and a solute-binding protein (PotD).

It is found in the cell inner membrane. The catalysed reaction is ATP + H2O + polyamine-[polyamine-binding protein]Side 1 = ADP + phosphate + polyamineSide 2 + [polyamine-binding protein]Side 1.. Its function is as follows. Part of the ABC transporter complex PotABCD involved in spermidine/putrescine import. Responsible for energy coupling to the transport system. In Nostoc sp. (strain PCC 7120 / SAG 25.82 / UTEX 2576), this protein is Spermidine/putrescine import ATP-binding protein PotA.